Here is a 604-residue protein sequence, read N- to C-terminus: MSEHDMQNTNPPLPPLPPEITQLLSGLDAAQWAWLSGYAWAKAGNGASAGLPALQTALPAAEPFSVTVLSASQTGNAKSVADKASDSLEAAGIQVRRAELKDYKAKNIADERRLLLVTSTQGEGEPPEEAVVLHKLLNGKKAPKLDKLQFAVLGLGDSSYPNFCRAGKDFDRRFEELGAKRLLERVDADLDFAAAADGWTGRIVARLKEEAAKNRATPAPQTTPPAGLQTAPDGRYCKADPFPAALLANQKITARQSDKDVRHIEIDLSGSDLHYLPGDALGVWFDNDPALVREILDLLGIDPATEIQAGGKTLPVASALLSHFELTQNTPAFVKGYAPFADDDELDRIAADNAVLQGFVQSTPIADVLHRFPAKLTAEQFAGLLRPLAPRLYSISSSQAEVGDEVHLTVGAVRFEHEGRARAGGASGFLADRLEEDGTVRVFVERNDGFRLPEDSRKPIVMIGSGTGVAPFRAFVQQRAAENAEGKNWLIFGNPHFARDFLYQTEWQQFAKDGFLHRYDFAWSRDQEEKIYVQDKIREQAEGLWQWLQEGAHIYVCGDAAKMAKDVEAALLDVIIGAGHLDEEGAEEYLDMLREEKRYQRDVY.

The Flavodoxin-like domain occupies 66–204; that stretch reads VTVLSASQTG…AADGWTGRIV (139 aa). Residues 72–77, 119–122, and 155–164 each bind FMN; these read SQTGNA, STQG, and LGDSSYPNFC. Residues 212–231 form a disordered region; it reads AKNRATPAPQTTPPAGLQTA. Low complexity predominate over residues 216–231; the sequence is ATPAPQTTPPAGLQTA. An FAD-binding FR-type domain is found at 239–453; it reads ADPFPAALLA…VERNDGFRLP (215 aa). FAD-binding positions include T327, Q361, 391 to 394, 409 to 411, and 424 to 427; these read RLYS, TVG, and GGAS. NADP(+) is bound by residues 524–525, 530–534, and D566; these read SR and KIYVQ. Y604 serves as a coordination point for FAD.

The protein belongs to the NADPH-dependent sulphite reductase flavoprotein subunit CysJ family. It in the N-terminal section; belongs to the flavodoxin family. In the C-terminal section; belongs to the flavoprotein pyridine nucleotide cytochrome reductase family. In terms of assembly, alpha(8)-beta(8). The alpha component is a flavoprotein, the beta component is a hemoprotein. FAD is required as a cofactor. FMN serves as cofactor.

It carries out the reaction hydrogen sulfide + 3 NADP(+) + 3 H2O = sulfite + 3 NADPH + 4 H(+). It participates in sulfur metabolism; hydrogen sulfide biosynthesis; hydrogen sulfide from sulfite (NADPH route): step 1/1. Component of the sulfite reductase complex that catalyzes the 6-electron reduction of sulfite to sulfide. This is one of several activities required for the biosynthesis of L-cysteine from sulfate. The flavoprotein component catalyzes the electron flow from NADPH -&gt; FAD -&gt; FMN to the hemoprotein component. The protein is Sulfite reductase [NADPH] flavoprotein alpha-component of Neisseria meningitidis serogroup C / serotype 2a (strain ATCC 700532 / DSM 15464 / FAM18).